The sequence spans 283 residues: Fructose-1,6-bisphosphatase class 1 (283 aa).

Mg(2+) contacts are provided by Glu-67, Asp-86, Leu-88, and Asp-89. Substrate is bound by residues 89–92 (DGSS), Tyr-195, and Lys-225. Glu-231 serves as a coordination point for Mg(2+).

It belongs to the FBPase class 1 family. Homotetramer. Mg(2+) serves as cofactor.

It localises to the cytoplasm. The enzyme catalyses beta-D-fructose 1,6-bisphosphate + H2O = beta-D-fructose 6-phosphate + phosphate. The protein operates within carbohydrate biosynthesis; gluconeogenesis. This chain is Fructose-1,6-bisphosphatase class 1, found in Natronomonas pharaonis (strain ATCC 35678 / DSM 2160 / CIP 103997 / JCM 8858 / NBRC 14720 / NCIMB 2260 / Gabara) (Halobacterium pharaonis).